The primary structure comprises 88 residues: ATP synthase epsilon chain (88 aa).

Belongs to the ATPase epsilon chain family. In terms of assembly, F-type ATPases have 2 components, CF(1) - the catalytic core - and CF(0) - the membrane proton channel. CF(1) has five subunits: alpha(3), beta(3), gamma(1), delta(1), epsilon(1). CF(0) has three main subunits: a, b and c.

It localises to the cell inner membrane. In terms of biological role, produces ATP from ADP in the presence of a proton gradient across the membrane. This is ATP synthase epsilon chain (atpC) from Chlorobium limicola.